We begin with the raw amino-acid sequence, 359 residues long: MGKVLQKEAFGLAAKDNSGVLSPFSFTRRETGEKDVRFKVLFCGICHSDLHMVKNEWGMSTYPLVPGHEIVGVVTEVGAKVTKFKTGEKVGVGCLVSSCGSCDSCTEGMENYCPKSIQTYGFPYYDNTITYGGYSDHMVCEEGFVIRIPDNLPLDAAAPLLCAGITVYSPMKYHGLDKPGMHIGVVGLGGLGHVGVKFAKAMGTKVTVISTSEKKRDEAINRLGADAFLVSRDPKQIKDAMGTMDGIIDTVSATHSLLPLLGLLKHKGKLVMVGAPEKPLELPVMPLIFERKMVMGSMIGGIKETQEMIDMAGKHNITADIELISADYVNTAMERLEKADVRYRFVIDVANTLKPNPNL.

Cys46 is a binding site for Zn(2+). Ser48 is a binding site for NADP(+). Residues His68, Glu69, Cys99, Cys102, Cys105, Cys113, and Cys162 each contribute to the Zn(2+) site. NADP(+)-binding positions include Thr166, 187–192 (GLGGLG), 210–215 (STSEKK), Thr250, Gly274, and 297–299 (SMI).

The protein belongs to the zinc-containing alcohol dehydrogenase family. Homodimer. Requires Zn(2+) as cofactor. As to expression, expressed in the differentiation and elongation zones of primary and lateral roots. Expressed in the hypocotyl, cotyledon veins, vasculature of the first rosette leaves, hydathodes and trichomes. In stems, expressed in the vascular cambium and developing xylem tissues. Expressed in the style, anthers, stamen filaments, stigmatic regions in flowers, and abscission and style regions of siliques.

The catalysed reaction is (E)-cinnamyl alcohol + NADP(+) = (E)-cinnamaldehyde + NADPH + H(+). The protein operates within aromatic compound metabolism; phenylpropanoid biosynthesis. Involved in lignin biosynthesis. Catalyzes the final step specific for the production of lignin monomers. Catalyzes the NADPH-dependent reduction of coniferaldehyde, 5-hydroxyconiferaldehyde, sinapaldehyde, 4-coumaraldehyde and caffeyl aldehyde to their respective alcohols. The protein is Cinnamyl alcohol dehydrogenase 8 (CAD8) of Arabidopsis thaliana (Mouse-ear cress).